The sequence spans 291 residues: Nucleotide-binding protein MSMEG_3079/MSMEI_3001 (291 aa).

14 to 21 is a binding site for ATP; sequence GLSGAGRG. Position 65 to 68 (65 to 68) interacts with GTP; sequence DVRS.

Belongs to the RapZ-like family.

In terms of biological role, displays ATPase and GTPase activities. The chain is Nucleotide-binding protein MSMEG_3079/MSMEI_3001 from Mycolicibacterium smegmatis (strain ATCC 700084 / mc(2)155) (Mycobacterium smegmatis).